A 287-amino-acid chain; its full sequence is Protease HtpX homolog (287 aa).

2 helical membrane-spanning segments follow: residues 5 to 25 (IRTGLLMAALTALFVAIGYWI) and 28 to 48 (GAGAAIALAFAAAGNFVAYWV). H131 serves as a coordination point for Zn(2+). E132 is an active-site residue. H135 lines the Zn(2+) pocket. 2 consecutive transmembrane segments (helical) span residues 146-166 (VTATLAGAIGMISNLAIFFGG) and 174-194 (PFAGIAGLLLLLLAPLTATLV). E203 provides a ligand contact to Zn(2+).

It belongs to the peptidase M48B family. Zn(2+) is required as a cofactor.

It localises to the cell inner membrane. The polypeptide is Protease HtpX homolog (Acidiphilium cryptum (strain JF-5)).